A 328-amino-acid polypeptide reads, in one-letter code: tRNA uridine(34) hydroxylase (328 aa).

One can recognise a Rhodanese domain in the interval 130–224 (LDEDTVVLDT…YGKDPEVQGE (95 aa)). Catalysis depends on cysteine 184, which acts as the Cysteine persulfide intermediate.

It belongs to the TrhO family.

The catalysed reaction is uridine(34) in tRNA + AH2 + O2 = 5-hydroxyuridine(34) in tRNA + A + H2O. Functionally, catalyzes oxygen-dependent 5-hydroxyuridine (ho5U) modification at position 34 in tRNAs. The chain is tRNA uridine(34) hydroxylase from Streptococcus pyogenes serotype M12 (strain MGAS2096).